A 287-amino-acid polypeptide reads, in one-letter code: PsbP domain-containing protein 1, chloroplastic (287 aa).

This sequence belongs to the PsbP family. As to quaternary structure, partially associated with photosystem I (PSI) complex, but is not a subunit of the complex. Interacts with PsaA and PsaB, but not with PasF.

The protein localises to the plastid. It is found in the chloroplast thylakoid lumen. Its function is as follows. Photosystem I assembly factor that assists the proper folding and integration of PsaB and PsaA into the thylakoid membrane. This Arabidopsis thaliana (Mouse-ear cress) protein is PsbP domain-containing protein 1, chloroplastic (PPD1).